A 176-amino-acid polypeptide reads, in one-letter code: MRLPYSSSKPIPTNNNNNNNNTNNGISINKIPKSHYSYYQTQENNKPQQSQQHPLLQHQQQQQQQQQQQQQQQQQQQQQQQQQQPQQQPQIATITATISISPSINNIIVNNSPIKTPSKKHRSSSKKSPSSSKKLNKVLSCCFVCQSSISNPFIVKETPKANHYFCSIQCFAQASP.

The span at M1–P12 shows a compositional bias: polar residues. Disordered stretches follow at residues M1–Q88 and V109–S132. A compositionally biased stretch (low complexity) spans T13–N24. Residues S37–K46 show a composition bias toward polar residues. The segment covering P47–Q88 has biased composition (low complexity).

This is an uncharacterized protein from Dictyostelium discoideum (Social amoeba).